The chain runs to 279 residues: Putative ABC transporter ATP-binding protein GSU3001 (279 aa).

In terms of domain architecture, ABC transporter spans 1–237 (MRFSVDLKAY…PAEMESVKLR (237 aa)). Position 36–43 (36–43 (GSNGSGKT)) interacts with ATP.

Belongs to the ABC transporter superfamily.

Its subcellular location is the cell inner membrane. Its function is as follows. Probably part of an ABC transporter complex. Responsible for energy coupling to the transport system. The polypeptide is Putative ABC transporter ATP-binding protein GSU3001 (Geobacter sulfurreducens (strain ATCC 51573 / DSM 12127 / PCA)).